The sequence spans 164 residues: Crossover junction endodeoxyribonuclease RuvC (164 aa).

Residues Asp7, Glu67, and Asp140 contribute to the active site. Positions 7, 67, and 140 each coordinate Mg(2+).

Belongs to the RuvC family. As to quaternary structure, homodimer which binds Holliday junction (HJ) DNA. The HJ becomes 2-fold symmetrical on binding to RuvC with unstacked arms; it has a different conformation from HJ DNA in complex with RuvA. In the full resolvosome a probable DNA-RuvA(4)-RuvB(12)-RuvC(2) complex forms which resolves the HJ. Mg(2+) is required as a cofactor.

The protein localises to the cytoplasm. The catalysed reaction is Endonucleolytic cleavage at a junction such as a reciprocal single-stranded crossover between two homologous DNA duplexes (Holliday junction).. In terms of biological role, the RuvA-RuvB-RuvC complex processes Holliday junction (HJ) DNA during genetic recombination and DNA repair. Endonuclease that resolves HJ intermediates. Cleaves cruciform DNA by making single-stranded nicks across the HJ at symmetrical positions within the homologous arms, yielding a 5'-phosphate and a 3'-hydroxyl group; requires a central core of homology in the junction. The consensus cleavage sequence is 5'-(A/T)TT(C/G)-3'. Cleavage occurs on the 3'-side of the TT dinucleotide at the point of strand exchange. HJ branch migration catalyzed by RuvA-RuvB allows RuvC to scan DNA until it finds its consensus sequence, where it cleaves and resolves the cruciform DNA. The protein is Crossover junction endodeoxyribonuclease RuvC of Chloroflexus aggregans (strain MD-66 / DSM 9485).